A 456-amino-acid polypeptide reads, in one-letter code: CCA-adding enzyme (456 aa).

Residues Ser53 and Lys56 each coordinate ATP. Ser53 and Lys56 together coordinate CTP. Residues Asp65, Asp67, and Asp119 each coordinate Mg(2+). 3 residues coordinate ATP: His142, Lys161, and Tyr170. Residues His142, Lys161, and Tyr170 each contribute to the CTP site.

It belongs to the tRNA nucleotidyltransferase/poly(A) polymerase family. Archaeal CCA-adding enzyme subfamily. Homodimer. Requires Mg(2+) as cofactor.

The enzyme catalyses a tRNA precursor + 2 CTP + ATP = a tRNA with a 3' CCA end + 3 diphosphate. It carries out the reaction a tRNA with a 3' CCA end + 2 CTP + ATP = a tRNA with a 3' CCACCA end + 3 diphosphate. Catalyzes the addition and repair of the essential 3'-terminal CCA sequence in tRNAs without using a nucleic acid template. Adds these three nucleotides in the order of C, C, and A to the tRNA nucleotide-73, using CTP and ATP as substrates and producing inorganic pyrophosphate. tRNA 3'-terminal CCA addition is required both for tRNA processing and repair. Also involved in tRNA surveillance by mediating tandem CCA addition to generate a CCACCA at the 3' terminus of unstable tRNAs. While stable tRNAs receive only 3'-terminal CCA, unstable tRNAs are marked with CCACCA and rapidly degraded. This chain is CCA-adding enzyme, found in Thermococcus kodakarensis (strain ATCC BAA-918 / JCM 12380 / KOD1) (Pyrococcus kodakaraensis (strain KOD1)).